Reading from the N-terminus, the 897-residue chain is Alpha-actinin-2 (897 aa).

The actin-binding stretch occupies residues 1–257 (MNSMNQIETN…IMTYVSCFYH (257 aa)). Calponin-homology (CH) domains follow at residues 41 to 145 (KQQR…LRFA) and 154 to 260 (TSAK…HAFA). Spectrin repeat units follow at residues 284-394 (RLME…WLLN), 404-509 (HLAE…ALER), 519-630 (QLHL…SLQE), and 640-743 (RLRR…EVET). EF-hand domains are found at residues 756 to 791 (EQMNDFRASFNHFDRRKNGLMDHDDFRACLISMGYD) and 792 to 827 (LGEAEFARIMSLVDPNGQGTVTFQSFIDFMTRETAD). Residues Asp769, Asn773, Asp780, Asp805, Asn807, and Thr811 each coordinate Ca(2+).

The protein belongs to the alpha-actinin family. Homodimer; antiparallel. In terms of processing, ubiquitinated by FBXL22, leading to proteasomal degradation.

The protein resides in the cytoplasm. The protein localises to the myofibril. It is found in the sarcomere. It localises to the z line. Functionally, F-actin cross-linking protein which is thought to anchor actin to a variety of intracellular structures. This is a bundling protein. This is Alpha-actinin-2 (ACTN2) from Gallus gallus (Chicken).